The primary structure comprises 1041 residues: Leucine-rich repeat receptor-like protein kinase TDR (1041 aa).

Positions 1-29 are cleaved as a signal peptide; it reads MKKKNISPSLVLHPLLLLLLPFFAFNSLA. The Extracellular segment spans residues 30 to 652; sequence LKFSPQLLSL…HHKEERPKKT (623 aa). C69 and C76 are joined by a disulfide. N-linked (GlcNAc...) asparagine glycosylation is found at N78, N92, and N111. LRR repeat units follow at residues 80 to 104, 105 to 128, 130 to 152, 154 to 176, 177 to 199, 200 to 224, 225 to 248, 250 to 272, 273 to 296, 297 to 319, 321 to 344, 345 to 368, 369 to 392, 394 to 416, 418 to 439, 440 to 464, 466 to 488, 511 to 535, 536 to 558, 559 to 583, and 585 to 607; these read TAQV…IRYL, SSLL…IFDL, KLTT…ISKL, FLKV…VSRL, RFLE…AYGG, LQRL…LGLL, TELQ…FALL, NLKY…LGNL, SNLE…YSNL, KSLK…GFST, KNLT…IGEL, PELT…LGSN, GKLE…LCHG, KLYK…LTRC, SLWR…GFGS, LRNL…FATA, VLQY…IWKA, CKSF…IGHC, EKLL…EIST, LPSI…FGSS, and TITT…SFAH. The interval 186 to 188 is CLE peptide binding; that stretch reads GSY. The tract at residues 233–235 is CLE peptide binding; that stretch reads GYN. N-linked (GlcNAc...) asparagine glycans are attached at residues N258 and N271. The tract at residues 303–307 is CLE peptide binding; that stretch reads DFSSN. N322, N332, and N356 each carry an N-linked (GlcNAc...) asparagine glycan. The tract at residues 375 to 377 is CLE peptide binding; sequence DVS. A glycan (N-linked (GlcNAc...) asparagine) is linked at N378. An intrachain disulfide couples C390 to C416. Positions 421–423 are CLE peptide binding; that stretch reads RFR. N430, N442, N471, N525, and N542 each carry an N-linked (GlcNAc...) asparagine glycan. C511 and C535 form a disulfide bridge. N590 carries an N-linked (GlcNAc...) asparagine glycan. A disulfide bond links C620 and C628. Residues 653-673 form a helical membrane-spanning segment; that stretch reads AGAIVWILAAAIGVGFFVLVA. At 674 to 1041 the chain is on the cytoplasmic side; the sequence is ATRCFQKSYG…HDVKCQRIGV (368 aa). Position 710 is a phosphothreonine (T710). The region spanning 719–1001 is the Protein kinase domain; the sequence is SKTDNILGMG…DVLLILQEAK (283 aa). ATP-binding positions include 725 to 733 and K747; that span reads LGMGSTGTV. Residues Y798 and Y839 each carry the phosphotyrosine modification. The Proton acceptor role is filled by D852. Phosphoserine is present on S884. Phosphotyrosine occurs at positions 892 and 899. T900 bears the Phosphothreonine mark.

This sequence belongs to the protein kinase superfamily. Ser/Thr protein kinase family. Interacts specifically with the mature peptides CLE41p and CLE44p, especially in the presence of SERK2. Interacts with LURE1.2. As to expression, widely expressed along the vascular strands. In roots and hypocotyls, confined to procambial cells.

The protein localises to the cell membrane. It carries out the reaction L-seryl-[protein] + ATP = O-phospho-L-seryl-[protein] + ADP + H(+). The enzyme catalyses L-threonyl-[protein] + ATP = O-phospho-L-threonyl-[protein] + ADP + H(+). In terms of biological role, acts with CLE41p and CLE44p peptides as a ligand-receptor pair in a signal transduction pathway involved in the regulation of procambium maintenance and polarity during vascular-tissue development. Mediates repression of tracheary element differentiation and the promotion of procambial cells formation and polar division adjacent to phloem cells in the veins. The chain is Leucine-rich repeat receptor-like protein kinase TDR from Arabidopsis thaliana (Mouse-ear cress).